The chain runs to 449 residues: PGL/p-HBAD biosynthesis rhamnosyltransferase (449 aa).

Belongs to the glycosyltransferase 28 family.

Its function is as follows. Catalyzes the transfer of the first rhamnosyl residue on p-hydroxybenzoic acid or phenolphthiocerol derivatives to form, after O-methylation at position 2 of the sugar unit, mono-O-methyl-glycosyl-p-hydroxybenzoic acid derivative (p-HBAD I) and 2-O-methyl-rhamnosyl-phenolphthiocerol dimycocerosate (also called mycoside B) during p-hydroxybenzoic acid derivatives (p-HBAD) and glycosylated phenolphthiocerol dimycocerosates (PGL) biosynthesis. This Mycobacterium bovis (strain BCG / Pasteur 1173P2) protein is PGL/p-HBAD biosynthesis rhamnosyltransferase.